The following is a 207-amino-acid chain: Small ribosomal subunit protein uS4c (207 aa).

The region spanning M92–K153 is the S4 RNA-binding domain.

It belongs to the universal ribosomal protein uS4 family. As to quaternary structure, part of the 30S ribosomal subunit. Contacts protein S5. The interaction surface between S4 and S5 is involved in control of translational fidelity.

Its subcellular location is the plastid. The protein localises to the chloroplast. Its function is as follows. One of the primary rRNA binding proteins, it binds directly to 16S rRNA where it nucleates assembly of the body of the 30S subunit. Functionally, with S5 and S12 plays an important role in translational accuracy. The chain is Small ribosomal subunit protein uS4c (rps4) from Equisetum laevigatum (Smooth horsetail).